We begin with the raw amino-acid sequence, 1025 residues long: Multidrug resistance protein MdtC (1025 aa).

The next 12 helical transmembrane spans lie at Phe-3 to Leu-23, Glu-333 to Leu-353, Ile-360 to Cys-380, Leu-387 to Leu-407, Val-431 to Leu-451, Phe-463 to Pro-483, Leu-528 to Pro-548, Val-853 to Ser-873, Val-875 to Leu-895, Leu-897 to Val-917, Pro-953 to Gly-973, and Ile-984 to Val-1004.

This sequence belongs to the resistance-nodulation-cell division (RND) (TC 2.A.6) family. MdtC subfamily. Part of a tripartite efflux system composed of MdtA, MdtB and MdtC. MdtC forms a heteromultimer with MdtB.

It is found in the cell inner membrane. The MdtABC tripartite complex confers resistance against novobiocin and deoxycholate. The sequence is that of Multidrug resistance protein MdtC from Escherichia coli O17:K52:H18 (strain UMN026 / ExPEC).